Consider the following 644-residue polypeptide: Macrolide export ATP-binding/permease protein MacB (644 aa).

An ABC transporter domain is found at 4–242 (IECKNINRYF…SNVGRIQEKA (239 aa)). Residue 40–47 (GQSGSGKS) participates in ATP binding. The next 4 membrane-spanning stretches (helical) occupy residues 270-290 (LLTM…VALG), 524-544 (IALI…LVSV), 574-594 (LICV…SLVF), and 607-627 (AMSV…FGFM).

The protein belongs to the ABC transporter superfamily. Macrolide exporter (TC 3.A.1.122) family. Homodimer.

The protein localises to the cell inner membrane. Its function is as follows. Non-canonical ABC transporter that contains transmembrane domains (TMD), which form a pore in the inner membrane, and an ATP-binding domain (NBD), which is responsible for energy generation. Confers resistance against macrolides. This chain is Macrolide export ATP-binding/permease protein MacB, found in Neisseria meningitidis serogroup A / serotype 4A (strain DSM 15465 / Z2491).